The following is a 199-amino-acid chain: Small heat shock protein hspG4 (199 aa).

A sHSP domain is found at N30–N199. Positions K83–P105 are disordered.

The protein belongs to the small heat shock protein (HSP20) family.

The sequence is that of Small heat shock protein hspG4 (hspG4) from Dictyostelium discoideum (Social amoeba).